The sequence spans 442 residues: GDP-L-galactose phosphorylase 1 (442 aa).

Catalysis depends on His238, which acts as the Tele-GMP-histidine intermediate.

It belongs to the GDPGP1 family. Interacts with TLP1. As to expression, expressed in leaves, stems, roots, flowers and siliques. Highest expression in green tissues.

It is found in the cytoplasm. Its subcellular location is the nucleus. It carries out the reaction GDP-beta-L-galactose + phosphate = beta-L-galactose 1-phosphate + GDP + H(+). The protein operates within cofactor biosynthesis; L-ascorbate biosynthesis via GDP-alpha-D-mannose pathway; L-ascorbate from GDP-alpha-D-mannose: step 2/5. Its activity is regulated as follows. Not inhibited by dithiothreitol, N-ethylmaleimide, phenylmethane sulfonyl fluoride, ascorbate, L-galactose and L-galactonolactone. Catalyzes a reaction of the Smirnoff-Wheeler pathway, the major route to ascorbate biosynthesis in plants. Acts as a phosphorylase rather than as a transferase. Uses preferentially GDP-L-galactose and GDP-D-glucose as substrates. Lower activity with GDP-L-fucose, very low activity with GDP-D-mannose, and no activity with UDP-D-glucose, UDP-D-galactose or ADP-D-glucose. Highly specific for inorganic phosphate as the guanylyl acceptor. The chain is GDP-L-galactose phosphorylase 1 (VTC2) from Arabidopsis thaliana (Mouse-ear cress).